The following is a 182-amino-acid chain: CKLF-like MARVEL transmembrane domain-containing protein 3 (182 aa).

Acidic residues predominate over residues 1–12 (MWPPDPDPDPDP). The tract at residues 1 to 21 (MWPPDPDPDPDPEPAGGSRPG) is disordered. The MARVEL domain occupies 36–155 (FLCSLKGRLL…DFYLIFNDVA (120 aa)). 3 consecutive transmembrane segments (helical) span residues 64–84 (ASAFLTAPLLEFLLALYFLFA), 101–121 (MDFLRCVTAALIYFAISITAI), and 131–151 (AAGVFGFFATIVFATDFYLIF).

This sequence belongs to the chemokine-like factor family. As to expression, expressed in the leukocytes, placenta and testis.

It is found in the membrane. This is CKLF-like MARVEL transmembrane domain-containing protein 3 (CMTM3) from Homo sapiens (Human).